We begin with the raw amino-acid sequence, 147 residues long: Lysozyme C-1 (147 aa).

The signal sequence occupies residues 1–18; that stretch reads MKALIILGLLCLSVAVQG. Positions 19–147 constitute a C-type lysozyme domain; it reads KVFERCELAR…VSSYVEGCSL (129 aa). Intrachain disulfides connect Cys-24–Cys-145, Cys-48–Cys-133, Cys-83–Cys-99, and Cys-95–Cys-113. Residues Glu-53 and Asp-71 contribute to the active site.

This sequence belongs to the glycosyl hydrolase 22 family. Monomer. Expressed in stomach.

The protein localises to the secreted. The enzyme catalyses Hydrolysis of (1-&gt;4)-beta-linkages between N-acetylmuramic acid and N-acetyl-D-glucosamine residues in a peptidoglycan and between N-acetyl-D-glucosamine residues in chitodextrins.. Functionally, lysozymes have primarily a bacteriolytic function; those in tissues and body fluids are associated with the monocyte-macrophage system and enhance the activity of immunoagents. The polypeptide is Lysozyme C-1 (Ovis aries (Sheep)).